We begin with the raw amino-acid sequence, 203 residues long: Large ribosomal subunit protein uL22 (203 aa).

Composition is skewed to polar residues over residues 116–126 (QNGGESQNQEY) and 134–167 (VSKS…DSQL). Positions 116-203 (QNGGESQNQE…TVLAQEKEVK (88 aa)) are disordered. The span at 168–194 (SAKTNSTTTAKKTDLADNNTKNDATNT) shows a compositional bias: low complexity.

Belongs to the universal ribosomal protein uL22 family. Part of the 50S ribosomal subunit.

Functionally, this protein binds specifically to 23S rRNA; its binding is stimulated by other ribosomal proteins, e.g. L4, L17, and L20. It is important during the early stages of 50S assembly. It makes multiple contacts with different domains of the 23S rRNA in the assembled 50S subunit and ribosome. The globular domain of the protein is located near the polypeptide exit tunnel on the outside of the subunit, while an extended beta-hairpin is found that lines the wall of the exit tunnel in the center of the 70S ribosome. This is Large ribosomal subunit protein uL22 from Mesomycoplasma hyopneumoniae (strain 232) (Mycoplasma hyopneumoniae).